Consider the following 210-residue polypeptide: Redox-sensing transcriptional repressor Rex (210 aa).

A DNA-binding region (H-T-H motif) is located at residues 17–56 (KYHRYLGNLMRNDVDRISSKELSEKIGFTASQIRQDLNCF). 91–96 (GAGNIG) contributes to the NAD(+) binding site.

This sequence belongs to the transcriptional regulatory Rex family. As to quaternary structure, homodimer.

The protein localises to the cytoplasm. Its function is as follows. Modulates transcription in response to changes in cellular NADH/NAD(+) redox state. In Clostridium kluyveri (strain ATCC 8527 / DSM 555 / NBRC 12016 / NCIMB 10680 / K1), this protein is Redox-sensing transcriptional repressor Rex.